We begin with the raw amino-acid sequence, 450 residues long: Probable glycosidase CRR1 (450 aa).

Positions 1–17 (MSKRIIQLILLSAFARA) are cleaved as a signal peptide. In terms of domain architecture, GH16 spans 67–347 (SPESCVPVPA…WENAPDIKAH (281 aa)). The active-site Nucleophile is Glu-225. The Proton donor role is filled by Glu-229. The disordered stretch occupies residues 428-450 (AQRQQHHRRSLPHVEAPPITNTM).

This sequence belongs to the glycosyl hydrolase 16 family. CRR1 subfamily.

Its subcellular location is the spore wall. Its function is as follows. Spore specific glycosidase involved in spore wall assembly during sporulation. May be involved in copper import. The protein is Probable glycosidase CRR1 (CRR1) of Eremothecium gossypii (strain ATCC 10895 / CBS 109.51 / FGSC 9923 / NRRL Y-1056) (Yeast).